Reading from the N-terminus, the 1408-residue chain is DNA-directed RNA polymerase subunit beta'' (1408 aa).

Belongs to the RNA polymerase beta' chain family. RpoC2 subfamily. In terms of assembly, in plastids the minimal PEP RNA polymerase catalytic core is composed of four subunits: alpha, beta, beta', and beta''. When a (nuclear-encoded) sigma factor is associated with the core the holoenzyme is formed, which can initiate transcription.

Its subcellular location is the plastid. It is found in the chloroplast. The catalysed reaction is RNA(n) + a ribonucleoside 5'-triphosphate = RNA(n+1) + diphosphate. In terms of biological role, DNA-dependent RNA polymerase catalyzes the transcription of DNA into RNA using the four ribonucleoside triphosphates as substrates. The polypeptide is DNA-directed RNA polymerase subunit beta'' (Psilotum nudum (Whisk fern)).